A 578-amino-acid polypeptide reads, in one-letter code: Proline--tRNA ligase (578 aa).

This sequence belongs to the class-II aminoacyl-tRNA synthetase family. ProS type 1 subfamily. In terms of assembly, homodimer.

The protein resides in the cytoplasm. The enzyme catalyses tRNA(Pro) + L-proline + ATP = L-prolyl-tRNA(Pro) + AMP + diphosphate. Its function is as follows. Catalyzes the attachment of proline to tRNA(Pro) in a two-step reaction: proline is first activated by ATP to form Pro-AMP and then transferred to the acceptor end of tRNA(Pro). As ProRS can inadvertently accommodate and process non-cognate amino acids such as alanine and cysteine, to avoid such errors it has two additional distinct editing activities against alanine. One activity is designated as 'pretransfer' editing and involves the tRNA(Pro)-independent hydrolysis of activated Ala-AMP. The other activity is designated 'posttransfer' editing and involves deacylation of mischarged Ala-tRNA(Pro). The misacylated Cys-tRNA(Pro) is not edited by ProRS. The chain is Proline--tRNA ligase from Paraburkholderia xenovorans (strain LB400).